Reading from the N-terminus, the 60-residue chain is Small ribosomal subunit protein bS21 (60 aa).

Residues 38–60 (KGVKRREKEKAARKRLQKKHRMY) form a disordered region.

Belongs to the bacterial ribosomal protein bS21 family.

The polypeptide is Small ribosomal subunit protein bS21 (Mycoplasmoides gallisepticum (strain R(low / passage 15 / clone 2)) (Mycoplasma gallisepticum)).